The chain runs to 376 residues: Chlorophyll synthase, chloroplastic (376 aa).

The N-terminal 47 residues, 1-47 (MATSHLLAAASSTAASSATFRPPLLSLRSPPPSSLRLNRRRHFQVVR), are a transit peptide targeting the chloroplast. The tract at residues 48-69 (AAETDKETKANAPEKAPAGGSS) is disordered. The next 8 helical transmembrane spans lie at 95–115 (PVTW…SGNF), 171–191 (VITQ…LLDV), 197–217 (FPII…YSAP), 230–250 (FALG…LFGT), 255–275 (IVVL…VNDF), 300–320 (WICV…LFSS), 325–345 (YALA…QYFL), and 355–375 (YQAS…LATS).

It belongs to the UbiA prenyltransferase family. Chlorophyll synthase subfamily.

Its subcellular location is the plastid. It localises to the chloroplast membrane. It catalyses the reaction phytyl diphosphate + chlorophyllide a + H(+) = chlorophyll a + diphosphate. Involved in one of the last steps of the biosynthesis of chlorophyll a. The chain is Chlorophyll synthase, chloroplastic (CHLG) from Oryza sativa subsp. japonica (Rice).